The chain runs to 514 residues: Glucose-1-phosphate adenylyltransferase small subunit 2, chloroplastic/amyloplastic/cytosolic (514 aa).

Residues 1 to 64 constitute a chloroplast transit peptide; sequence MAMAAAMGVA…RRRPLVFSPR (64 aa). The interval 35–74 is disordered; sequence RPRRPRGVASSSSSSSSAGRRRRPLVFSPRAVSDSKSSQT. The span at 41 to 52 shows a compositional bias: low complexity; the sequence is GVASSSSSSSSA.

Belongs to the bacterial/plant glucose-1-phosphate adenylyltransferase family. Heterotetramer composed of two small and two large subunits. Expressed in leaves.

The protein localises to the plastid. It localises to the chloroplast. The protein resides in the amyloplast. It is found in the cytoplasm. Its subcellular location is the cytosol. It carries out the reaction alpha-D-glucose 1-phosphate + ATP + H(+) = ADP-alpha-D-glucose + diphosphate. The protein operates within glycan biosynthesis; starch biosynthesis. Activated by 3'phosphoglycerate, inhibited by orthophosphate. Allosteric regulation. Inhibited by inorganic phosphate (Pi). Involved in synthesis of starch. Catalyzes the synthesis of ADP-glucose, a molecule that serves as an activated glycosyl donor for alpha-1,4-glucan synthesis. The chloroplastic isoform 1 is essential for starch synthesis in leaf chloroplasts and the cytosolic isoform 2 for synthesis in seed endosperm. This is Glucose-1-phosphate adenylyltransferase small subunit 2, chloroplastic/amyloplastic/cytosolic from Oryza sativa subsp. japonica (Rice).